The primary structure comprises 37 residues: WNPFKELERAGQRVRDAVISAAPAVATVGQAAAIARG.

G37 bears the Glycine amide mark.

Belongs to the cecropin family.

The protein localises to the secreted. Cecropins have lytic and antibacterial activity against several Gram-positive and Gram-negative bacteria. This chain is Bactericidin B-2, found in Manduca sexta (Tobacco hawkmoth).